Here is a 289-residue protein sequence, read N- to C-terminus: MTKDELTEEESLSGKDYLDPPPVKTFEVRELKKWSFYRAVIAEFIATLLFLYVTVLTVIGFKSQTDINAGGGACASVGLLGISWAFGGMIFILVYCTAGISGGHINPAVTFGLFLASKVSLVRAVSYMVAQCLGATCGVGLVKVFQSTYYNRYGGGANMLSDGYNVGVGVGAEIIGTFVLVYTVFSATDPKRNARDSHIPVLAPLPIGFSVFMVHLATIPITGTGINPARSFGAAVIYNNQKAWDDQWIFWVGPFVGAAIAAFYHQFVLRAGAMKAYGSVRSQLHELHA.

Residue M1 is modified to N-acetylmethionine. Over M1–R38 the chain is Cytoplasmic. A Phosphothreonine modification is found at T7. Position 11 is a phosphoserine (S11). A helical transmembrane segment spans residues A39–I59. Topologically, residues G60 to L80 are extracellular. A helical membrane pass occupies residues G81–S101. Over G102 to A124 the chain is Cytoplasmic. Residues N106–A108 carry the NPA 1 motif. Residues V125–F145 form a helical membrane-spanning segment. The Extracellular portion of the chain corresponds to Q146–N165. The chain crosses the membrane as a helical span at residues V166–S186. The Cytoplasmic portion of the chain corresponds to A187–P200. The helical transmembrane segment at V201 to I221 threads the bilayer. Over T222–W248 the chain is Extracellular. The NPA 2 motif lies at N227–A229. The chain crosses the membrane as a helical span at residues I249–L269. Over R270–A289 the chain is Cytoplasmic. S279 and S282 each carry phosphoserine.

The protein belongs to the MIP/aquaporin (TC 1.A.8) family. PIP (TC 1.A.8.11) subfamily. In terms of tissue distribution, expressed above ground, and in flower buds.

Its subcellular location is the cell membrane. Aquaporins facilitate the transport of water and small neutral solutes across cell membranes. The protein is Probable aquaporin PIP2-6 (PIP2-6) of Arabidopsis thaliana (Mouse-ear cress).